Consider the following 262-residue polypeptide: Putative hydro-lyase Cbei_2760 (262 aa).

The protein belongs to the D-glutamate cyclase family.

In Clostridium beijerinckii (strain ATCC 51743 / NCIMB 8052) (Clostridium acetobutylicum), this protein is Putative hydro-lyase Cbei_2760.